The chain runs to 570 residues: MSMFCYQCQEAAGGRGCTVKGVCGKTEDIAKTQDLIIYVVKGIAIYSSQAREIGLNTSEADKFIVESLFSTITNANFDAKALNARVQEGLKVRQSLKDAIIKAGGSYNSKENKSWTSKFLSVLGIKNDKDEKEIHDAAVWAANNPEDFKKKAETVGVLATENEDIRSLRELLTYGLKGMAAYLEHANNLGYDEDSIHAFMEKALVATLDDTLSADELTALVLECGKYGVDVMALLDKANTSTYGNPEITKVNIGVRNNPGILISGHDLKDMEELLKQTEGTGVDVYTHSEMLPANYYPAFKKYKHFVGNYGNAWWKQNEEFEAFNGPILMTTNCIVTPKASYKDRMYTTGVTGFEGVKHINASKDGKKDFSEIIEHAKRCSSPKEIEKGEIIGGFAHNQVLALAPQVVDAVKTGAIKRFFVMAGCDGRMKSRNYYTDFAKALPKDTVILTAGCAKYKYNKLDLGDINGIPRVLDAGQCNDSYSLAVIALKLKEVFELEDINELPISYNIAWYEQKAVIVLLALLHLGVKNIHLGPTLPAFLSPNVAKILVENFGIGTISSVDEDIKMFMN.

4 residues coordinate [4Fe-4S] cluster: Cys-5, Cys-8, Cys-17, and Cys-23. Hybrid [4Fe-2O-2S] cluster-binding residues include His-266, Glu-290, Cys-334, Cys-425, Cys-453, Cys-478, Glu-513, and Lys-515. Residue Cys-425 is modified to Cysteine persulfide.

It belongs to the HCP family. Requires [4Fe-4S] cluster as cofactor. It depends on hybrid [4Fe-2O-2S] cluster as a cofactor.

The protein localises to the cytoplasm. It catalyses the reaction A + NH4(+) + H2O = hydroxylamine + AH2 + H(+). Catalyzes the reduction of hydroxylamine to form NH(3) and H(2)O. The chain is Hydroxylamine reductase from Clostridium botulinum (strain Langeland / NCTC 10281 / Type F).